Reading from the N-terminus, the 241-residue chain is Triosephosphate isomerase (241 aa).

9–11 (NWK) is a binding site for substrate. The active-site Electrophile is the H96. The Proton acceptor role is filled by E165. Residues G171, S204, and 225–226 (GG) each bind substrate.

Belongs to the triosephosphate isomerase family. Homodimer.

Its subcellular location is the cytoplasm. The catalysed reaction is D-glyceraldehyde 3-phosphate = dihydroxyacetone phosphate. Its pathway is carbohydrate biosynthesis; gluconeogenesis. The protein operates within carbohydrate degradation; glycolysis; D-glyceraldehyde 3-phosphate from glycerone phosphate: step 1/1. Involved in the gluconeogenesis. Catalyzes stereospecifically the conversion of dihydroxyacetone phosphate (DHAP) to D-glyceraldehyde-3-phosphate (G3P). The chain is Triosephosphate isomerase from Gloeothece citriformis (strain PCC 7424) (Cyanothece sp. (strain PCC 7424)).